Here is a 202-residue protein sequence, read N- to C-terminus: Cutinase (202 aa).

Residues 1–20 (MKTSAQQLLSALLLPLSVLA) form the signal peptide. A disulfide bridge links Cys31 with Cys106. Ser117 serves as the catalytic Nucleophile. An intrachain disulfide couples Cys165 to Cys172. Asp169 is an active-site residue. His182 (proton donor/acceptor) is an active-site residue.

This sequence belongs to the cutinase family. Post-translationally, the 2 disulfide bonds play a critical role in holding the catalytic residues in juxta-position; reduction of the disulfide bridges results in the complete inactivation of the enzyme.

It is found in the secreted. The enzyme catalyses cutin + H2O = cutin monomers.. In terms of biological role, catalyzes the hydrolysis of complex carboxylic polyesters found in the cell wall of plants. Degrades cutin, a macromolecule that forms the structure of the plant cuticle. Allows pathogenic fungi to penetrate through the cuticular barrier into the host plant during the initial stage of fungal infection. The polypeptide is Cutinase (Botryotinia fuckeliana (Noble rot fungus)).